The chain runs to 367 residues: Porin Omp2a (367 aa).

Positions 1 to 22 are cleaved as a signal peptide; the sequence is MNIKSLLLGSAAALVAASGAQA.

The protein belongs to the alphaproteobacteria porin family. Monomer.

It localises to the cell outer membrane. In terms of biological role, forms passive diffusion pores that allow small molecular weight hydrophilic materials across the outer membrane. The protein is Porin Omp2a (omp2a) of Brucella canis (strain ATCC 23365 / NCTC 10854 / RM-666).